The chain runs to 388 residues: 3-ketoacyl-CoA thiolase (388 aa).

Cysteine 91 functions as the Acyl-thioester intermediate in the catalytic mechanism. Active-site proton acceptor residues include histidine 343 and cysteine 373.

The protein belongs to the thiolase-like superfamily. Thiolase family. In terms of assembly, heterotetramer of two alpha chains (FadB) and two beta chains (FadA).

The protein resides in the cytoplasm. The enzyme catalyses an acyl-CoA + acetyl-CoA = a 3-oxoacyl-CoA + CoA. Its pathway is lipid metabolism; fatty acid beta-oxidation. Functionally, catalyzes the final step of fatty acid oxidation in which acetyl-CoA is released and the CoA ester of a fatty acid two carbons shorter is formed. This Photorhabdus laumondii subsp. laumondii (strain DSM 15139 / CIP 105565 / TT01) (Photorhabdus luminescens subsp. laumondii) protein is 3-ketoacyl-CoA thiolase.